The sequence spans 313 residues: Olfactory receptor 10K1 (313 aa).

The Extracellular portion of the chain corresponds to 1 to 25 (MEQVNKTVVREFVVLGFSSLARLQQ). N-linked (GlcNAc...) asparagine glycosylation occurs at Asn-5. Residues 26 to 46 (LLFVIFLLLYLFTLGTNAIII) traverse the membrane as a helical segment. At 47-54 (STIVLDRA) the chain is on the cytoplasmic side. A helical membrane pass occupies residues 55–75 (LHTPMYFFLAILSCSEICYTF). Residues 76-99 (VIVPKMLVDLLSQKKTISFLGCAI) are Extracellular-facing. The helical transmembrane segment at 100-120 (QMFSFLFFGSSHSFLLAAMGY) threads the bilayer. The Cytoplasmic portion of the chain corresponds to 121–139 (DRYMAICNPLRYSVLMGHG). Residues 140–160 (VCMGLMAAACACGFTVSLVTT) traverse the membrane as a helical segment. The Extracellular segment spans residues 161-197 (SLVFHLPFHSSNQLHHFFCDISPVLKLASQHSGFSQL). Residues 198–217 (VIFMLGVFALVIPLLLILVS) form a helical membrane-spanning segment. At 218–237 (YIRIISAILKIPSSVGRYKT) the chain is on the cytoplasmic side. A helical transmembrane segment spans residues 238 to 258 (FSTCASHLIVVTVHYSCASFI). Residues 259–271 (YLRPKTNYTSSQD) lie on the Extracellular side of the membrane. Asn-265 is a glycosylation site (N-linked (GlcNAc...) asparagine). The helical transmembrane segment at 272–292 (TLISVSYTILTPLFNPMIYSL) threads the bilayer. Residues 293 to 313 (RNKEFKSALRRTIGQTFYPLS) lie on the Cytoplasmic side of the membrane.

It belongs to the G-protein coupled receptor 1 family.

It localises to the cell membrane. Functionally, odorant receptor. The polypeptide is Olfactory receptor 10K1 (OR10K1) (Homo sapiens (Human)).